The primary structure comprises 55 residues: MAKATDVRPKITLACVECKERNYITRKNRRNDPDRIELKKFCPREGRHTIHRETR.

This sequence belongs to the bacterial ribosomal protein bL33 family.

This is Large ribosomal subunit protein bL33B from Salinispora tropica (strain ATCC BAA-916 / DSM 44818 / JCM 13857 / NBRC 105044 / CNB-440).